The sequence spans 380 residues: Probable protein phosphatase 2C 63 (380 aa).

In terms of domain architecture, PPM-type phosphatase spans 35-338; that stretch reads DYSIAVVQAN…DDISVIVVYL (304 aa). Mn(2+)-binding residues include Asp66, Gly67, Asp270, and Asp329.

It belongs to the PP2C family. The cofactor is Mg(2+). Mn(2+) serves as cofactor.

The enzyme catalyses O-phospho-L-seryl-[protein] + H2O = L-seryl-[protein] + phosphate. It carries out the reaction O-phospho-L-threonyl-[protein] + H2O = L-threonyl-[protein] + phosphate. Functionally, may dephosphorylate and repress plasma membrane H(+)-ATPases (PM H(+)-ATPases, e.g. AHA1 and AHA2), thus influencing negatively plant growth and fitness. The sequence is that of Probable protein phosphatase 2C 63 from Arabidopsis thaliana (Mouse-ear cress).